Here is a 142-residue protein sequence, read N- to C-terminus: Putative pre-16S rRNA nuclease (142 aa).

Belongs to the YqgF nuclease family.

Its subcellular location is the cytoplasm. Its function is as follows. Could be a nuclease involved in processing of the 5'-end of pre-16S rRNA. This is Putative pre-16S rRNA nuclease from Nitratidesulfovibrio vulgaris (strain DP4) (Desulfovibrio vulgaris).